A 335-amino-acid chain; its full sequence is Zinc-type alcohol dehydrogenase-like protein SAS2087 (335 aa).

Belongs to the zinc-containing alcohol dehydrogenase family. Quinone oxidoreductase subfamily.

The protein is Zinc-type alcohol dehydrogenase-like protein SAS2087 of Staphylococcus aureus (strain MSSA476).